Consider the following 526-residue polypeptide: tRNA modification GTPase MSS1, mitochondrial (526 aa).

The transit peptide at 1 to 19 (MNSASFLQSRLISRSFLVR) directs the protein to the mitochondrion. Positions 274-444 (GIKLVLLGAP…LISTLTSNFE (171 aa)) constitute a TrmE-type G domain. GTP is bound by residues 281–288 (GAPNVGKS), 328–332 (DTAGI), and 394–397 (NKSD).

This sequence belongs to the TRAFAC class TrmE-Era-EngA-EngB-Septin-like GTPase superfamily. TrmE GTPase family. In terms of assembly, forms a heterodimer with MTO1.

It localises to the mitochondrion. In terms of biological role, GTPase involved in the 5-carboxymethylaminomethyl modification (mnm(5)s(2)U34) of the wobble uridine base in mitochondrial tRNAs. Involved in the expression of cytochrome c oxidase subunit 1 (COX1). Works in association with the small subunit of mitoribosomes. This chain is tRNA modification GTPase MSS1, mitochondrial (MSS1), found in Saccharomyces cerevisiae (strain ATCC 204508 / S288c) (Baker's yeast).